The sequence spans 257 residues: Homeobox protein goosecoid (257 aa).

A DNA-binding region (homeobox) is located at residues 160–219 (KRRHRTIFTDEQLEALENLFQETKYPDVGTREQLARKVHLREEKVEVWFKNRRAKWRRQK). Positions 213-257 (AKWRRQKRSSSEESENAEKWNKTSSSKASPEKREEEGKSDLDSDS) are disordered. The segment covering 241–257 (SPEKREEEGKSDLDSDS) has biased composition (basic and acidic residues).

It belongs to the paired homeobox family. Bicoid subfamily.

The protein localises to the nucleus. Functionally, regulates chordin (CHRD). May play a role in spatial programing within discrete embryonic fields or lineage compartments during organogenesis. In concert with NKX3-2, plays a role in defining the structural components of the middle ear; required for the development of the entire tympanic ring. Probably involved in the regulatory networks that define neural crest cell fate specification and determine mesoderm cell lineages in mammals. In Saguinus labiatus (Red-chested mustached tamarin), this protein is Homeobox protein goosecoid (GSC).